Consider the following 662-residue polypeptide: Phosphomethylpyrimidine synthase (662 aa).

Substrate contacts are provided by residues asparagine 235, methionine 264, tyrosine 293, histidine 329, 349–351, 390–393, and glutamate 429; these read SRG and DGMR. Residue histidine 433 participates in Zn(2+) binding. Tyrosine 456 contributes to the substrate binding site. Histidine 497 lines the Zn(2+) pocket. Residues cysteine 577, cysteine 580, and cysteine 585 each contribute to the [4Fe-4S] cluster site.

Belongs to the ThiC family. Homodimer. [4Fe-4S] cluster is required as a cofactor.

The enzyme catalyses 5-amino-1-(5-phospho-beta-D-ribosyl)imidazole + S-adenosyl-L-methionine = 4-amino-2-methyl-5-(phosphooxymethyl)pyrimidine + CO + 5'-deoxyadenosine + formate + L-methionine + 3 H(+). It functions in the pathway cofactor biosynthesis; thiamine diphosphate biosynthesis. Its function is as follows. Catalyzes the synthesis of the hydroxymethylpyrimidine phosphate (HMP-P) moiety of thiamine from aminoimidazole ribotide (AIR) in a radical S-adenosyl-L-methionine (SAM)-dependent reaction. This chain is Phosphomethylpyrimidine synthase, found in Shewanella halifaxensis (strain HAW-EB4).